The sequence spans 313 residues: Adhesin MafA 2 (313 aa).

The N-terminal stretch at 1–14 (MKTLLLLIPLVLTA) is a signal peptide. A lipid anchor (N-palmitoyl cysteine) is attached at Cys-15. Cys-15 carries the S-diacylglycerol cysteine lipid modification. The span at 282–297 (GDTTAQNRPDFKQNNG) shows a compositional bias: polar residues. The disordered stretch occupies residues 282–313 (GDTTAQNRPDFKQNNGKKPDVGNEVIRRRKGG).

It belongs to the MafA family.

The protein localises to the cell outer membrane. In Neisseria meningitidis serogroup C / serotype 2a (strain ATCC 700532 / DSM 15464 / FAM18), this protein is Adhesin MafA 2 (mafA2).